The chain runs to 138 residues: Ribosome-binding factor A (138 aa).

Residues 119–138 are disordered; sequence RSPEVQRDLGPSNEKDDEQN.

It belongs to the RbfA family. In terms of assembly, monomer. Binds 30S ribosomal subunits, but not 50S ribosomal subunits or 70S ribosomes.

It is found in the cytoplasm. One of several proteins that assist in the late maturation steps of the functional core of the 30S ribosomal subunit. Associates with free 30S ribosomal subunits (but not with 30S subunits that are part of 70S ribosomes or polysomes). Required for efficient processing of 16S rRNA. May interact with the 5'-terminal helix region of 16S rRNA. This is Ribosome-binding factor A from Agrobacterium fabrum (strain C58 / ATCC 33970) (Agrobacterium tumefaciens (strain C58)).